A 1074-amino-acid polypeptide reads, in one-letter code: Transmembrane protein 132E (1074 aa).

The signal sequence occupies residues 1–25 (MAPGMSGRGGAALLCLSALLAHASG). At 26 to 893 (RSHPASPSPP…LTDLEIGMYA (868 aa)) the chain is on the extracellular side. N-linked (GlcNAc...) asparagine glycosylation is found at Asn-70 and Asn-91. 2 disordered regions span residues 202 to 226 (PPAP…ATGE) and 241 to 264 (ASGG…ESPT). Residues 243–256 (GGCGGSRRGAGPGV) show a composition bias toward gly residues. Asn-318 and Asn-399 each carry an N-linked (GlcNAc...) asparagine glycan. Disordered stretches follow at residues 563 to 585 (RSVR…ASRG) and 814 to 867 (GRDE…VPPT). A compositionally biased stretch (low complexity) spans 841-862 (GAGPPGSALPAPEAPGPGTASP). A helical transmembrane segment spans residues 894 to 914 (LLGVFCLAILVFLINCIVFVL). Topologically, residues 915–1074 (RYRHKRIPPE…NYMRRIKEIA (160 aa)) are cytoplasmic. The interval 946 to 1063 (VQGELSPPAG…PTRPTAPPDL (118 aa)) is disordered. Residues 972-984 (SGSSQTSVQSQVH) are compositionally biased toward low complexity. A compositionally biased stretch (acidic residues) spans 1034–1044 (GEEDEEEEEDL).

It belongs to the TMEM132 family.

The protein resides in the membrane. In terms of biological role, required for normal inner ear hair cell function and hearing. This Homo sapiens (Human) protein is Transmembrane protein 132E.